A 122-amino-acid chain; its full sequence is Large ribosomal subunit protein uL14c (122 aa).

The protein belongs to the universal ribosomal protein uL14 family. Part of the 50S ribosomal subunit.

It is found in the plastid. Its subcellular location is the chloroplast. Binds to 23S rRNA. The protein is Large ribosomal subunit protein uL14c of Ipomoea purpurea (Common morning glory).